Here is an 87-residue protein sequence, read N- to C-terminus: Small ribosomal subunit protein bS20 (87 aa).

The tract at residues 1–25 is disordered; that stretch reads MANIKSAKKRAVQSEKHRLHNASRR.

This sequence belongs to the bacterial ribosomal protein bS20 family.

Functionally, binds directly to 16S ribosomal RNA. The polypeptide is Small ribosomal subunit protein bS20 (Baumannia cicadellinicola subsp. Homalodisca coagulata).